Reading from the N-terminus, the 511-residue chain is MMKMRWLSAAVMLTLYTSSSWAFSIDDVAKQAQSLAGKGYETPKSNLPSVFRDMKYADYQQIQFNHDKAYWNNLKTPFKLEFYHQGMYFDTPVKINEVTATAVKRIKYSPDYFTFGDVQHDKDTVKDLGFAGFKVLYPINSKDKNDEIVSMLGASYFRVIGAGQVYGLSARGLAIDTALPSGEEFPRFKEFWIERPKPTDKRLTIYALLDSPRATGAYKFVVMPGRDTVVDVQSKIYLRDKVGKLGVAPLTSMFLFGPNQPSPANNYRPELHDSNGLSIHAGNGEWIWRPLNNPKHLAVSSFSMENPQGFGLLQRGRDFSRFEDLDDRYDLRPSAWVTPKGEWGKGSVELVEIPTNDETNDNIVAYWTPDQLPEPGKEMNFKYTITFSRDEDKLHAPDNAWVQQTRRSTGDVKQSNLIRQPDGTIAFVVDFTGAEMKKLPEDTPVTAQTSIGDNGEIVESTVRYNPVTKGWRLVMRVKVKDAKKTTEMRAALVNADQTLSETWSYQLPANE.

The first 22 residues, 1–22, serve as a signal peptide directing secretion; it reads MMKMRWLSAAVMLTLYTSSSWA.

Belongs to the OpgD/OpgG family.

It localises to the periplasm. Its pathway is glycan metabolism; osmoregulated periplasmic glucan (OPG) biosynthesis. Its function is as follows. Involved in the biosynthesis of osmoregulated periplasmic glucans (OPGs). The chain is Glucans biosynthesis protein G from Escherichia coli (strain K12 / MC4100 / BW2952).